The chain runs to 172 residues: Calcium channel flower homolog (172 aa).

Topologically, residues 1 to 32 (MSSSGGAPGASASSAPPAQEEGMTWWYRWLCR) are cytoplasmic. Residues 33–53 (LSGVLGAVSCAISGLFNCITI) form a helical membrane-spanning segment. Topologically, residues 54 to 57 (HPLN) are extracellular. The helical transmembrane segment at 58–78 (IAAGVWMIMNAFILLLCEAPF) threads the bilayer. The Cytoplasmic segment spans residues 79 to 102 (CCQFIEFANTVAEKVDRLRSWQKA). The helical transmembrane segment at 103 to 123 (VFYCGMAVVPIVISLTLTTLL) threads the bilayer. Over 124 to 125 (GN) the chain is Extracellular. Residues 126–142 (AIAFATGVLYGLSALGK) traverse the membrane as a helical segment. Residues 143–172 (KGDAISYARIQQQRQQADEEKLAETLEGEL) lie on the Cytoplasmic side of the membrane.

This sequence belongs to the calcium channel flower family. In terms of assembly, interacts with adaptor protein complex 2 (AP-2). In terms of tissue distribution, detected in skin cells at low levels of expression (at protein level).

It is found in the cell membrane. The protein localises to the cytoplasmic vesicle. The protein resides in the secretory vesicle. It localises to the synaptic vesicle. Its subcellular location is the golgi apparatus. It is found in the vesicle. The protein localises to the early endosome. The protein resides in the recycling endosome. It localises to the endoplasmic reticulum membrane. Its function is as follows. Transmembrane protein which mediates synaptic endocytosis and fitness-based cell culling. In response to different stimulus strengths, controls two major modes of synaptic vesicle (SV) retrieval in hippocampal neurons; Clathrin-mediated endocytosis (CME) in response to mild stimulation and activity-dependent bulk endocytosis (ADBE) in response to strong stimulation. In cytotoxic T-lymphoocytes (CTLs) facilitates calcium-dependent endocytosis of cytotoxic granules at the immuno synapse. Different isoforms work as fitness fingerprints in 'loser' and 'winner' cells and thereby mediate win/lose decisions as part of the cell competition process. In terms of biological role, functions with the other flower isoforms to produce tissue-specific fitness fingerprints that identify unfit or fit cells during cell selection processes in order to maintain tissue health. During cell competition, if levels of this isoform in cells is higher than in the surrounding neighboring cells, the cells are recognized as 'winner' cells, and do not undergo elimination via apoptosis. Functions with the other flower isoforms to produce tissue-specific fitness fingerprints that identify unfit or fit cells during cell selection processes in order to maintain tissue health. During cell competition, if levels of this isoform in unfit cells is higher than in the surrounding neighboring cells, the cells are recognized as 'loser' cells, and undergo elimination via apoptosis to be replaced by the surrounding healthy 'winner' cell population. In Homo sapiens (Human), this protein is Calcium channel flower homolog (CACFD1).